The chain runs to 129 residues: UPF0146 protein VNG_2609C (129 aa).

The protein belongs to the UPF0146 family.

This Halobacterium salinarum (strain ATCC 700922 / JCM 11081 / NRC-1) (Halobacterium halobium) protein is UPF0146 protein VNG_2609C.